The sequence spans 178 residues: ATP-dependent protease subunit HslV (178 aa).

The active site involves threonine 7. 3 residues coordinate Na(+): glycine 162, cysteine 165, and threonine 168.

The protein belongs to the peptidase T1B family. HslV subfamily. A double ring-shaped homohexamer of HslV is capped on each side by a ring-shaped HslU homohexamer. The assembly of the HslU/HslV complex is dependent on binding of ATP.

The protein resides in the cytoplasm. The catalysed reaction is ATP-dependent cleavage of peptide bonds with broad specificity.. Its activity is regulated as follows. Allosterically activated by HslU binding. Functionally, protease subunit of a proteasome-like degradation complex believed to be a general protein degrading machinery. The sequence is that of ATP-dependent protease subunit HslV from Paraburkholderia phymatum (strain DSM 17167 / CIP 108236 / LMG 21445 / STM815) (Burkholderia phymatum).